Here is a 171-residue protein sequence, read N- to C-terminus: Co-chaperone protein HscB homolog (171 aa).

The J domain occupies 2–74; it reads NHFELFGLPP…ISRAEYLLSQ (73 aa).

This sequence belongs to the HscB family. Interacts with HscA and stimulates its ATPase activity.

In terms of biological role, co-chaperone involved in the maturation of iron-sulfur cluster-containing proteins. Seems to help targeting proteins to be folded toward HscA. This chain is Co-chaperone protein HscB homolog, found in Vibrio vulnificus (strain YJ016).